The following is a 545-amino-acid chain: Threonine--tRNA ligase catalytic subunit (545 aa).

The segment at 139 to 433 (DHRLIGEKLD…LLEHFKGKLP (295 aa)) is catalytic. Residues Cys231, His282, and His410 each coordinate Zn(2+).

This sequence belongs to the class-II aminoacyl-tRNA synthetase family. In terms of assembly, homodimer. Probably interacts with its editing subunit. Zn(2+) is required as a cofactor.

Its subcellular location is the cytoplasm. The enzyme catalyses tRNA(Thr) + L-threonine + ATP = L-threonyl-tRNA(Thr) + AMP + diphosphate + H(+). Its function is as follows. Catalyzes the attachment of threonine to tRNA(Thr) in a two-step reaction: L-threonine is first activated by ATP to form Thr-AMP and then transferred to the acceptor end of tRNA(Thr). Also activates L-serine and transfers it to tRNA(Thr) but cannot deacylate incorrectly charged amino acid; unlike most archaea the editing function is found in a freestanding protein. The polypeptide is Threonine--tRNA ligase catalytic subunit (Saccharolobus islandicus (strain L.S.2.15 / Lassen #1) (Sulfolobus islandicus)).